The primary structure comprises 197 residues: Ras-related protein Rab-7B (197 aa).

Residues 14 to 21, 33 to 38, 57 to 61, 119 to 122, and 152 to 153 contribute to the GTP site; these read GEKSVGKT, VTLKPT, DTSGQ, NKID, and AK. The Effector region signature appears at 31-39; sequence RFVTLKPTI. 2 S-geranylgeranyl cysteine lipidation sites follow: cysteine 196 and cysteine 197.

Belongs to the small GTPase superfamily. Rab family.

Its function is as follows. Protein transport. Probably involved in vesicular traffic. The protein is Ras-related protein Rab-7B (rab7B) of Dictyostelium discoideum (Social amoeba).